The primary structure comprises 238 residues: Ankyrin repeat domain-containing protein 49 (238 aa).

A Phosphoserine modification is found at Ser48. ANK repeat units follow at residues 77–105 (LLWAAEKNRLTTVQRLLSERATHVNTRDE), 106–135 (DKYTPLHRAAYNGHLDVVRELIAHGADVHA), 139–168 (DGWTPLHSACKWNNARVASFLLQHDADVNA), and 172–205 (GLLTPLHLAAGNRDSKDTLELLLMNRYIKPGLKN).

The protein resides in the nucleus. May have a role in spermatogenesis where it promotes autophagy in response to serum starvation, via the NF-kappaB pathway. The protein is Ankyrin repeat domain-containing protein 49 (ANKRD49) of Bos taurus (Bovine).